We begin with the raw amino-acid sequence, 878 residues long: Aconitate hydratase A (878 aa).

Positions 426, 492, and 495 each coordinate [4Fe-4S] cluster.

The protein belongs to the aconitase/IPM isomerase family. Monomer. Requires [4Fe-4S] cluster as cofactor.

The enzyme catalyses citrate = D-threo-isocitrate. It carries out the reaction (2S,3R)-3-hydroxybutane-1,2,3-tricarboxylate = 2-methyl-cis-aconitate + H2O. The protein operates within carbohydrate metabolism; tricarboxylic acid cycle; isocitrate from oxaloacetate: step 2/2. It functions in the pathway organic acid metabolism; propanoate degradation. Its function is as follows. Involved in the catabolism of short chain fatty acids (SCFA) via the tricarboxylic acid (TCA)(acetyl degradation route) and probably the 2-methylcitrate cycle I (propionate degradation route). Catalyzes the reversible isomerization of citrate to isocitrate via cis-aconitate. Could catalyze the hydration of 2-methyl-cis-aconitate to yield (2R,3S)-2-methylisocitrate. The apo form of AcnA functions as a RNA-binding regulatory protein. The sequence is that of Aconitate hydratase A (acnA) from Rickettsia prowazekii (strain Madrid E).